The primary structure comprises 218 residues: Nucleoid occlusion factor SlmA (218 aa).

The 61-residue stretch at 30–90 (ERRQQVLTVL…ALIEHIESTL (61 aa)) folds into the HTH tetR-type domain. Positions 53 to 72 (TTARLAKEVGVSEAALYRYF) form a DNA-binding region, H-T-H motif.

It belongs to the nucleoid occlusion factor SlmA family. In terms of assembly, homodimer. Interacts with FtsZ.

It localises to the cytoplasm. It is found in the nucleoid. In terms of biological role, required for nucleoid occlusion (NO) phenomenon, which prevents Z-ring formation and cell division over the nucleoid. Acts as a DNA-associated cell division inhibitor that binds simultaneously chromosomal DNA and FtsZ, and disrupts the assembly of FtsZ polymers. SlmA-DNA-binding sequences (SBS) are dispersed on non-Ter regions of the chromosome, preventing FtsZ polymerization at these regions. The polypeptide is Nucleoid occlusion factor SlmA (Haemophilus influenzae (strain PittGG)).